We begin with the raw amino-acid sequence, 114 residues long: Dolichyl-diphosphooligosaccharide--protein glycosyltransferase subunit DAD1 (114 aa).

Residues M1 to D30 are Cytoplasmic-facing. Residues L31–G51 form a helical membrane-spanning segment. The Lumenal portion of the chain corresponds to S52 to P54. A helical transmembrane segment spans residues F55–L75. The Cytoplasmic portion of the chain corresponds to R76 to R93. A helical membrane pass occupies residues A94–G114.

Belongs to the DAD/OST2 family. As to quaternary structure, component of the oligosaccharyltransferase (OST) complex.

The protein resides in the endoplasmic reticulum membrane. Its pathway is protein modification; protein glycosylation. Functionally, subunit of the oligosaccharyl transferase (OST) complex that catalyzes the initial transfer of a defined glycan (Glc(3)Man(9)GlcNAc(2) in eukaryotes) from the lipid carrier dolichol-pyrophosphate to an asparagine residue within an Asn-X-Ser/Thr consensus motif in nascent polypeptide chains, the first step in protein N-glycosylation. N-glycosylation occurs cotranslationally and the complex associates with the Sec61 complex at the channel-forming translocon complex that mediates protein translocation across the endoplasmic reticulum (ER). All subunits are required for a maximal enzyme activity. The polypeptide is Dolichyl-diphosphooligosaccharide--protein glycosyltransferase subunit DAD1 (DAD1) (Oryza sativa subsp. indica (Rice)).